A 442-amino-acid chain; its full sequence is MLKHDTIAAIATPPGEGSIAVVRLSGPQAIVIADRIFSGSVASFASHTIHLGQVIFEETLIDQALLLLMRSPRSFTGEDVVEFQCHGGFFACSQILDALIALGARPALPGEFSQRAFLNGKIDLVQAEAIQNLIVAENIDAFRIAQTHFQGNFSKKIQEIHTLIIEALAFLEVLADFPEEEQPDLLVPQEKIQNALHIVEDFISSFDEGQRLAQGTSLILAGKPNVGKSSLLNALLQKNRAIVTHIPGTTRDILEEQWLLQGKRIRLLDTAGQRTTDNDIEKEGIERALSAMEEADGILWVIDATQPLEDLPKILFTKPSFLLWNKADLTPPPFLDTSLPQFAISAKTGEGLTQVKQALIQWMQKQEAGKTSKVFLVSSRHHMILQEVARCLKEAQQNLYLQPPEIIALELREALHSIGMLSGKEVTESILGEIFSKFCIGK.

Positions 23, 82, and 121 each coordinate (6S)-5-formyl-5,6,7,8-tetrahydrofolate. One can recognise a TrmE-type G domain in the interval 215 to 364 (GTSLILAGKP…VKQALIQWMQ (150 aa)). Asn225 lines the K(+) pocket. GTP-binding positions include 225–230 (NVGKSS), 244–250 (THIPGTT), 269–272 (DTAG), and 325–328 (NKAD). Residue Ser229 participates in Mg(2+) binding. K(+) is bound by residues Thr244, Ile246, and Thr249. Thr250 lines the Mg(2+) pocket. Lys442 lines the (6S)-5-formyl-5,6,7,8-tetrahydrofolate pocket.

It belongs to the TRAFAC class TrmE-Era-EngA-EngB-Septin-like GTPase superfamily. TrmE GTPase family. In terms of assembly, homodimer. Heterotetramer of two MnmE and two MnmG subunits. K(+) is required as a cofactor.

Its subcellular location is the cytoplasm. In terms of biological role, exhibits a very high intrinsic GTPase hydrolysis rate. Involved in the addition of a carboxymethylaminomethyl (cmnm) group at the wobble position (U34) of certain tRNAs, forming tRNA-cmnm(5)s(2)U34. The polypeptide is tRNA modification GTPase MnmE (Chlamydia pneumoniae (Chlamydophila pneumoniae)).